A 131-amino-acid polypeptide reads, in one-letter code: Profilin-2 (131 aa).

It belongs to the profilin family. In terms of assembly, occurs in many kinds of cells as a complex with monomeric actin in a 1:1 ratio.

The protein localises to the cytoplasm. The protein resides in the cytoskeleton. Functionally, binds to actin and affects the structure of the cytoskeleton. At high concentrations, profilin prevents the polymerization of actin, whereas it enhances it at low concentrations. By binding to PIP2, it inhibits the formation of IP3 and DG. The protein is Profilin-2 of Solanum lycopersicum (Tomato).